Consider the following 160-residue polypeptide: Protein BOLA1, chloroplastic (160 aa).

The N-terminal 50 residues, 1–50 (MFSSSIRLIVSGFHRTQPLKSPVNSPSVFISVPKFFNSESKSTGTGSRSV), are a transit peptide targeting the chloroplast. Positions 39 to 61 (ESKSTGTGSRSVAMSSVEKTGSD) are enriched in polar residues. Residues 39 to 66 (ESKSTGTGSRSVAMSSVEKTGSDSGAIE) are disordered.

Belongs to the bolA/yrbA family. In terms of assembly, interacts in vitro with GRXS14, GRXS15, GRXS16 and GRXS17, but not with GRXC5. Interacts in vivo only with GRXS14 and GRXS16.

It is found in the plastid. Its subcellular location is the chloroplast. In terms of biological role, may act either alone or in interaction with glutaredoxin as a redox-regulated transcriptional regulator, or as a factor regulating Fe-S cluster biogenesis. The glutaredoxin-BOLA1 heterodimers bind a labile, oxygen sensitive iron-sulfur cluster. The protein is Protein BOLA1, chloroplastic of Arabidopsis thaliana (Mouse-ear cress).